The sequence spans 1048 residues: MTISGGNQHNNNANRKYEKLIKQPQMQFGSSVTGTQTDVDSCRDADADANAVRQDFSNFNKHFGNGHAITDRTMLLRLEDDVTTAAGIVTYKGKSNGNGNGNGNGSIGSISLDFNGSPTSSTSIGIASGSSSNTHLASGGGVGGIGGSEPAGWMCHCCNLIARRCFGINVRRCVLALLAITMVSIFYYTHYVDTGVFNGLIQRDTHPAPIINCRMINSGGKHIRNASPAPDHRSEARLRIDPKVLVFVETTYSGLGRDIAELLVYNRIKYKIEVAGKSLPVLTNLDKGRYGVIVFENLDKYLNMDKWNRELLDKYCREYSVGIVGFVSPSEETLVGAQLRDFPLFVNTNLRLRDASLNPLSSVLRLTRAGETAWGALPGDDWAVFQHNHSTYEPVEWAQRNTQEYPADSVGQVQLPLTTVLQDRGQLDGIQRVLFGSSLRFWLHRLVFLDALSYLSHGQLSLNLERMILVDIDDIFVGEKGTRLRPDDVRALIATQKNIAAMVPGFRFNLGFSGKYYHHGTREENLGDDFLLQNVQEFNWFSHMWKHQQPHLYDNLTLLMAEMHLNYAFAVDHNIPTDSGYSISPHHSGVYPAHELLYMAWKKVWNVKVTSTEEYPHLRPARLRRGFIHRNIMVLPRQTCGLFTHTMYIDRYPGGRDKLDESIQGGELFQTIVYNPINIFMTHMSNYGSDRLALYTFQSVIKFLQCWTNLKLASAPPVQLAEMYFRLHPEEVDPVWGNPCDDVRHKKIWSKTKNCDSLPKFLVIGPQKTGTTALYTFLSMHGSIASNIASPETFEEVQFFNGNNYYRGLDWYMDFFPSESLPNTSSPMPTQLGSPRFMFEKSATYFDGEAVPKRSHALLPHAKIVTILISPAKRAYSWYQHQRSHGDVIANNYSFYQVITASDSAPRALKDLRNRCLNPGKYAQHLEHWLAYYPAQQLHIIDGEQLRLNPIDVMNELQRFLKIQPLLDYSNHLRYDVKKGFYCQAVSEKRNKCLGKSKGRQYPAMDERSAKLLQRYYLNHNTALVKLLKKLGSRPIPQWLKDDLSTGT.

Topologically, residues 1 to 172 (MTISGGNQHN…RRCFGINVRR (172 aa)) are cytoplasmic. A helical; Signal-anchor for type II membrane protein transmembrane segment spans residues 173–192 (CVLALLAITMVSIFYYTHYV). A heparan sulfate N-deacetylase region spans residues 192 to 752 (VDTGVFNGLI…VRHKKIWSKT (561 aa)). Residues 193–1048 (DTGVFNGLIQ…WLKDDLSTGT (856 aa)) are Lumenal-facing. Residues Asn-388 and Asn-555 are each glycosylated (N-linked (GlcNAc...) asparagine). Residues 753-1048 (KNCDSLPKFL…WLKDDLSTGT (296 aa)) are heparan sulfate N-sulfotransferase. Catalysis depends on Lys-768, which acts as the For sulfotransferase activity. 3'-phosphoadenylyl sulfate is bound at residue 768–772 (KTGTT). Asn-823 carries an N-linked (GlcNAc...) asparagine glycan. Ser-877 contributes to the 3'-phosphoadenylyl sulfate binding site. N-linked (GlcNAc...) asparagine glycosylation occurs at Asn-892. Cys-983 and Cys-993 are oxidised to a cystine. 998–1002 (KGRQY) serves as a coordination point for 3'-phosphoadenylyl sulfate.

The protein belongs to the sulfotransferase 1 family. NDST subfamily. In terms of assembly, monomer.

Its subcellular location is the golgi apparatus membrane. The enzyme catalyses alpha-D-glucosaminyl-[heparan sulfate](n) + 3'-phosphoadenylyl sulfate = N-sulfo-alpha-D-glucosaminyl-[heparan sulfate](n) + adenosine 3',5'-bisphosphate + 2 H(+). Its pathway is glycan metabolism; heparan sulfate biosynthesis. It participates in glycan metabolism; heparin biosynthesis. Its function is as follows. Essential bifunctional enzyme that catalyzes both the N-deacetylation and the N-sulfation of glucosamine (GlcNAc) of the glycosaminoglycan in heparan sulfate. Modifies the GlcNAc-GlcA disaccharide repeating sugar backbone to make N-sulfated heparosan, a prerequisite substrate for later modifications in heparin biosynthesis. Plays a role in diffusion of morphogen wingless (wg) via its role in heparan sulfate proteoglycans (HSPGs) biosynthesis, HSPGs being required for movement of wg morphogens. Required for wg signaling during both embryonic and imaginal disk development. Also required for FGF receptor signaling. The chain is Bifunctional heparan sulfate N-deacetylase/N-sulfotransferase (sfl) from Drosophila melanogaster (Fruit fly).